A 146-amino-acid polypeptide reads, in one-letter code: Large ribosomal subunit protein uL15 (146 aa).

The interval 1–45 (MTIKLHHLRPAPGSKTERTRVGRGEGSKGKTAGRGTKGTKARKNV) is disordered. The span at 15–28 (KTERTRVGRGEGSK) shows a compositional bias: basic and acidic residues.

This sequence belongs to the universal ribosomal protein uL15 family. Part of the 50S ribosomal subunit.

Functionally, binds to the 23S rRNA. This chain is Large ribosomal subunit protein uL15, found in Mycobacteroides abscessus (strain ATCC 19977 / DSM 44196 / CCUG 20993 / CIP 104536 / JCM 13569 / NCTC 13031 / TMC 1543 / L948) (Mycobacterium abscessus).